The chain runs to 503 residues: Ent-kaurene oxidase-like 5 (503 aa).

The helical transmembrane segment at 8–28 threads the bilayer; sequence GAGGIGVAAAAAVVAATLAVV. A heme-binding site is contributed by cysteine 448.

It belongs to the cytochrome P450 family. Heme is required as a cofactor. In terms of tissue distribution, expressed in roots.

Its subcellular location is the membrane. Functionally, may hydroxylate diterpenes. This Oryza sativa subsp. japonica (Rice) protein is Ent-kaurene oxidase-like 5.